Consider the following 384-residue polypeptide: Mannitol-1-phosphate 5-dehydrogenase (384 aa).

A5–G16 contacts NAD(+).

Belongs to the mannitol dehydrogenase family.

It catalyses the reaction D-mannitol 1-phosphate + NAD(+) = beta-D-fructose 6-phosphate + NADH + H(+). The chain is Mannitol-1-phosphate 5-dehydrogenase from Vibrio cholerae serotype O1 (strain ATCC 39541 / Classical Ogawa 395 / O395).